The chain runs to 598 residues: Peroxisomal multifunctional enzyme type 2 (598 aa).

Residues 1-309 (MSSSDGKLRY…LEVLEKLKEG (309 aa)) are (3R)-hydroxyacyl-CoA dehydrogenase. Residues 16–40 (VVTG…AKVV), Leu-24, Asp-43, 78–79 (SV), and Asn-102 each bind NAD(+). Ser-154 lines the substrate pocket. Catalysis depends on Tyr-167, which acts as the Proton acceptor. Residues 167–171 (YTAAK) and 199–202 (AASR) each bind NAD(+). The interval 310–598 (GGDAIEDAFE…VDLKSSQAKL (289 aa)) is enoyl-CoA hydratase 2. (3R)-3-hydroxydecanoyl-CoA contacts are provided by residues 390–391 (HG), Lys-419, 496–501 (DKNPLH), Gly-519, and Phe-549. The 118-residue stretch at 469-586 (PAPNRQPDAT…VETGKEVISG (118 aa)) folds into the MaoC-like domain. A Microbody targeting signal motif is present at residues 596-598 (AKL).

The protein belongs to the short-chain dehydrogenases/reductases (SDR) family. In terms of assembly, homodimer.

The protein resides in the peroxisome. The catalysed reaction is a (3R)-3-hydroxyacyl-CoA + NAD(+) = a 3-oxoacyl-CoA + NADH + H(+). It carries out the reaction a (3R)-3-hydroxyacyl-CoA = a (2E)-enoyl-CoA + H2O. It functions in the pathway lipid metabolism; fatty acid beta-oxidation. Functionally, bifunctional enzyme acting on the peroxisomal beta-oxidation pathway for fatty acids. The chain is Peroxisomal multifunctional enzyme type 2 from Drosophila melanogaster (Fruit fly).